We begin with the raw amino-acid sequence, 357 residues long: DNA replication and repair protein RecF (357 aa).

Residue G30–T37 coordinates ATP.

Belongs to the RecF family.

It is found in the cytoplasm. The RecF protein is involved in DNA metabolism; it is required for DNA replication and normal SOS inducibility. RecF binds preferentially to single-stranded, linear DNA. It also seems to bind ATP. The sequence is that of DNA replication and repair protein RecF from Shigella dysenteriae serotype 1 (strain Sd197).